The following is a 545-amino-acid chain: Lysine--tRNA ligase (545 aa).

Positions 33–41 (VSGLQHIGR) match the 'HIGH' region motif. The short motif at 288–292 (DMSSS) is the 'KMSKS' region element.

It belongs to the class-I aminoacyl-tRNA synthetase family.

It is found in the cytoplasm. It catalyses the reaction tRNA(Lys) + L-lysine + ATP = L-lysyl-tRNA(Lys) + AMP + diphosphate. This Aeropyrum pernix (strain ATCC 700893 / DSM 11879 / JCM 9820 / NBRC 100138 / K1) protein is Lysine--tRNA ligase (lysS).